We begin with the raw amino-acid sequence, 246 residues long: MTSSLSRPSGRRADELRKVALTRHYTKHAEGSVLVEFGDTKVICTASVAERVPEFLRDRGQGWLTAEYGMLPRATHTRSDREAARGKQTGRTQEIQRLIGRALRAVFDLEALGPRTIHIDCDVIQADGGTRTASITGAFVAAHDAVSKLIAAGKLARSPITDHVAAISVGVYEGVPLLDLDYAEDSRCDTDMNVVMTGAGGFVEVQGTAEGVPFSRAEMNALLDLAQSGIGQLVQLQKDVLGAGNV.

Phosphate contacts are provided by residues R91 and 129–131 (GTR).

It belongs to the RNase PH family. As to quaternary structure, homohexameric ring arranged as a trimer of dimers.

It catalyses the reaction tRNA(n+1) + phosphate = tRNA(n) + a ribonucleoside 5'-diphosphate. In terms of biological role, phosphorolytic 3'-5' exoribonuclease that plays an important role in tRNA 3'-end maturation. Removes nucleotide residues following the 3'-CCA terminus of tRNAs; can also add nucleotides to the ends of RNA molecules by using nucleoside diphosphates as substrates, but this may not be physiologically important. Probably plays a role in initiation of 16S rRNA degradation (leading to ribosome degradation) during starvation. The sequence is that of Ribonuclease PH from Burkholderia ambifaria (strain ATCC BAA-244 / DSM 16087 / CCUG 44356 / LMG 19182 / AMMD) (Burkholderia cepacia (strain AMMD)).